We begin with the raw amino-acid sequence, 312 residues long: UDP-N-acetylenolpyruvoylglucosamine reductase (312 aa).

The FAD-binding PCMH-type domain maps to 24-206; that stretch reads GIGGPADLFA…SADILKVRNE (183 aa). The active site involves arginine 166. Catalysis depends on serine 217, which acts as the Proton donor. Glutamate 307 is an active-site residue.

It belongs to the MurB family. It depends on FAD as a cofactor.

Its subcellular location is the cytoplasm. It catalyses the reaction UDP-N-acetyl-alpha-D-muramate + NADP(+) = UDP-N-acetyl-3-O-(1-carboxyvinyl)-alpha-D-glucosamine + NADPH + H(+). Its pathway is cell wall biogenesis; peptidoglycan biosynthesis. Cell wall formation. This is UDP-N-acetylenolpyruvoylglucosamine reductase from Solibacter usitatus (strain Ellin6076).